Reading from the N-terminus, the 57-residue chain is MSRLYAIILIALVFNVIMTIMPDMKVEAVSCEDCPEHCATKDQRAKCDNDRCVCEPK.

A signal peptide spans 1 to 19; the sequence is MSRLYAIILIALVFNVIMT. The propeptide occupies 20 to 28; sequence IMPDMKVEA. Disulfide bonds link Cys-31–Cys-47, Cys-34–Cys-52, and Cys-38–Cys-54.

It belongs to the short scorpion toxin superfamily. Potassium channel inhibitor family. Alpha-KTx 08 subfamily. As to expression, expressed by the venom gland.

It is found in the secreted. Inhibits Kv1.1/KCNA1, Kv1.3/KCNA3 and Shaker potassium channels. This chain is Potassium channel toxin MeuTXKalpha2, found in Mesobuthus eupeus (Lesser Asian scorpion).